Consider the following 576-residue polypeptide: Urease subunit alpha (576 aa).

In terms of domain architecture, Urease spans glycine 132 to phenylalanine 576. 3 residues coordinate Ni(2+): histidine 137, histidine 139, and lysine 220. Residue lysine 220 is modified to N6-carboxylysine. Histidine 222 is a substrate binding site. 2 residues coordinate Ni(2+): histidine 249 and histidine 275. The active-site Proton donor is the histidine 323. A Ni(2+)-binding site is contributed by aspartate 363.

This sequence belongs to the metallo-dependent hydrolases superfamily. Urease alpha subunit family. In terms of assembly, heterotrimer of UreA (gamma), UreB (beta) and UreC (alpha) subunits. Three heterotrimers associate to form the active enzyme. The cofactor is Ni cation. In terms of processing, carboxylation allows a single lysine to coordinate two nickel ions.

It localises to the cytoplasm. It carries out the reaction urea + 2 H2O + H(+) = hydrogencarbonate + 2 NH4(+). It functions in the pathway nitrogen metabolism; urea degradation; CO(2) and NH(3) from urea (urease route): step 1/1. This Paenarthrobacter aurescens (strain TC1) protein is Urease subunit alpha.